Reading from the N-terminus, the 839-residue chain is MPIVLVRPTNRTRRLDSTGAGMGPSSHQQQESPLPTITHCAGCTTAWSPCSFNSSDMETPLQFQRGFFPEQPPPPPRSSHLHCQQQQQSQDKPCAPFAPLPHPHHHPHLAHQQPGSGGSSPCLRCNSCASSGAPAAGAGAGDNLSLLLRTSSPGGAFRTRTSSPLSGSSCCCCCSSRRGSQLNVSELTPSSHASALRQQYAQQPASASQYHQCHSLQPATSPTGSLGSLGSGPPLSHHHHHPHPAHHQHHQPQARRESNPFTEIAMSSCRYNGGVMRPLSNLSSSRRNLQEMDSEAQPLQPPASVVGGGGGASSPSAAAAASSSAPEIVVSKPEHNNSNNLALYGTGGGGSTGGGGGGSGHGSSSGTKSSKKKNQNIGYKLGHRRALFEKRKRLSDYALIFGMFGIVVMVIETELSWGAYDKASLYSLALKCLISLSTIILLGLIIVYHAREIQLFMVDNGADDWRIAMTYERIFFICLEILVCAIHPIPGNYTFTWTARLAFSYAPSTTTADVDIILSIPMFLRLYLIARVMLLHSKLFTDASSRSIGALNKINFNTRFVMKTLMTICPGTVLLVFSISLWIIAAWTVRACERYHDQQDVTSNFLGAMWLISITFLSIGYGDMVPNTYCGKGVCLLTGIMGAGCTALVVAVVARKLELTKAEKHVHNFMMDTQLTKRVKNAAANVLRETWLIYKNTKLVKKIDHAKVRKHQRKFLQAIHQLRSVKMEQRKLNDQANTLVDLAKTQNIMYDMISDLNERSEDFEKRIVTLETKLETLIGSIHALPGLISQTIRQQQRDFIETQMENYDKHVSYNAERSRSSSRRRRSSSTAPPTSSESS.

Disordered regions lie at residues 1–33 (MPIV…QESP), 64–115 (QRGF…QQPG), 195–258 (ALRQ…RRES), and 280–375 (SNLS…KKNQ). Low complexity-rich tracts occupy residues 198-212 (QQYA…QYHQ) and 219-235 (ATSP…GPPL). Residues 236 to 253 (SHHHHHPHPAHHQHHQPQ) show a composition bias toward basic residues. Over residues 313 to 326 (SSPSAAAAASSSAP) the composition is skewed to low complexity. A compositionally biased stretch (gly residues) spans 345–363 (GTGGGGSTGGGGGGSGHGS). A helical transmembrane segment spans residues 398–418 (ALIFGMFGIVVMVIETELSWG). The residue at position 420 (Tyr420) is a Phosphotyrosine. A helical transmembrane segment spans residues 428–448 (LALKCLISLSTIILLGLIIVY). Residues 474–494 (IFFICLEILVCAIHPIPGNYT) traverse the membrane as a helical segment. A helical membrane pass occupies residues 516–536 (IILSIPMFLRLYLIARVMLLH). Residues 565-585 (LMTICPGTVLLVFSISLWIIA) form a helical membrane-spanning segment. An intramembrane region (pore-forming) is located at residues 605–625 (FLGAMWLISITFLSIGYGDMV). Residues 634–654 (VCLLTGIMGAGCTALVVAVVA) traverse the membrane as a helical segment. The segment at 672 to 748 (DTQLTKRVKN…LVDLAKTQNI (77 aa)) is calmodulin-binding. The span at 810–819 (HVSYNAERSR) shows a compositional bias: basic and acidic residues. The interval 810–839 (HVSYNAERSRSSSRRRRSSSTAPPTSSESS) is disordered. The span at 828–839 (SSTAPPTSSESS) shows a compositional bias: low complexity.

The protein belongs to the potassium channel KCNN family. KCa2.2/KCNN2 subfamily. In terms of assembly, homodimer. Heteromultimer with KCNN1 and KCNN3. The complex is composed of 4 channel subunits each of which binds to a calmodulin subunit which regulates the channel activity through calcium-binding. Interacts (via N-terminal domain) with MPP2. Expressed in atrial and ventricular myocytes with higher levels in atrial myocytes (at protein level). Highly expressed in brain, liver and colon with low levels in kidney and testis. In colon, detected in smooth muscle cells.

The protein resides in the membrane. Its subcellular location is the cytoplasm. It localises to the myofibril. The protein localises to the sarcomere. It is found in the z line. It catalyses the reaction K(+)(in) = K(+)(out). Its activity is regulated as follows. Inhibited by bee venom neurotoxin apamin. Inhibited by UCL 1684 and tetraethylammonium (TEA). Its function is as follows. Small conductance calcium-activated potassium channel that mediates the voltage-independent transmembrane transfer of potassium across the cell membrane through a constitutive interaction with calmodulin which binds the intracellular calcium allowing its opening. The current is characterized by a voltage-independent activation, an intracellular calcium concentration increase-dependent activation and a single-channel conductance of about 3 picosiemens. Also presents an inwardly rectifying current, thus reducing its already small outward conductance of potassium ions, which is particularly the case when the membrane potential displays positive values, above + 20 mV. The inward rectification could be due to a blockade of the outward current by intracellular divalent cations such as calcium and magnesium and could also be due to an intrinsic property of the channel pore, independent of intracellular divalent ions. There are three positively charged amino acids in the S6 transmembrane domain, close to the pore, that collectively control the conductance and rectification through an electrostatic mechanism. Additionally, electrostatic contributions from these residues also play an important role in determining the intrinsic open probability of the channel in the absence of calcium, affecting the apparent calcium affinity for activation. Forms an heteromeric complex with calmodulin, which is constitutively associated in a calcium-independent manner. Channel opening is triggered when calcium binds the calmodulin resulting in a rotary movement leading to the formation of the dimeric complex to open the gate. Plays a role in the repolarization phase of cardiac action potential. The protein is Small conductance calcium-activated potassium channel protein 2 of Mus musculus (Mouse).